The primary structure comprises 371 residues: Probable diguanylate cyclase DgcC (371 aa).

5 helical membrane-spanning segments follow: residues 46–66 (AVGL…HPPP), 68–88 (WWWL…WQIA), 112–132 (WVGV…IMCL), 143–163 (FVAG…LTGI), and 171–191 (PLEW…FGWV). The 132-residue stretch at 240 to 371 (RDATLLIIDI…AGRNRTEVAA (132 aa)) folds into the GGDEF domain. Mg(2+) contacts are provided by Asp248 and Ile249. Residues Asn256 and Asp265 each contribute to the substrate site. Residue Asp291 participates in Mg(2+) binding.

Mg(2+) serves as cofactor.

It localises to the cell inner membrane. It carries out the reaction 2 GTP = 3',3'-c-di-GMP + 2 diphosphate. Its pathway is purine metabolism; 3',5'-cyclic di-GMP biosynthesis. A probable diguanylate cyclase. The last member of a cascade of expressed proteins, its expression requires DgcM. DgcC production induces biosynthesis of cellulose in some E.coli isolates, but not in K12 strains. Cyclic-di-GMP is a second messenger which controls cell surface-associated traits in bacteria. The sequence is that of Probable diguanylate cyclase DgcC from Escherichia coli (strain K12).